A 61-amino-acid chain; its full sequence is Small ribosomal subunit protein uS14B (61 aa).

Residues C24, C27, C40, and C43 each coordinate Zn(2+).

This sequence belongs to the universal ribosomal protein uS14 family. Zinc-binding uS14 subfamily. Part of the 30S ribosomal subunit. Contacts proteins S3 and S10. Requires Zn(2+) as cofactor.

Functionally, binds 16S rRNA, required for the assembly of 30S particles and may also be responsible for determining the conformation of the 16S rRNA at the A site. The protein is Small ribosomal subunit protein uS14B of Pediococcus pentosaceus (strain ATCC 25745 / CCUG 21536 / LMG 10740 / 183-1w).